Here is a 429-residue protein sequence, read N- to C-terminus: Serine hydroxymethyltransferase (429 aa).

(6S)-5,6,7,8-tetrahydrofolate is bound by residues Leu-126 and 130–132; that span reads GHL. Residue Lys-235 is modified to N6-(pyridoxal phosphate)lysine. 359–361 lines the (6S)-5,6,7,8-tetrahydrofolate pocket; the sequence is SPF.

It belongs to the SHMT family. As to quaternary structure, homodimer. Pyridoxal 5'-phosphate serves as cofactor.

The protein localises to the cytoplasm. The enzyme catalyses (6R)-5,10-methylene-5,6,7,8-tetrahydrofolate + glycine + H2O = (6S)-5,6,7,8-tetrahydrofolate + L-serine. Its pathway is one-carbon metabolism; tetrahydrofolate interconversion. The protein operates within amino-acid biosynthesis; glycine biosynthesis; glycine from L-serine: step 1/1. Catalyzes the reversible interconversion of serine and glycine with tetrahydrofolate (THF) serving as the one-carbon carrier. This reaction serves as the major source of one-carbon groups required for the biosynthesis of purines, thymidylate, methionine, and other important biomolecules. Also exhibits THF-independent aldolase activity toward beta-hydroxyamino acids, producing glycine and aldehydes, via a retro-aldol mechanism. The sequence is that of Serine hydroxymethyltransferase from Synechococcus sp. (strain CC9902).